We begin with the raw amino-acid sequence, 874 residues long: MKLGAWVAAQLPTTRTAVRTRLTRLVVSIVAGLLLYASFPPRNCWWAAVVALALLAWVLTHRATTPVGGLGYGLLFGLVFYVSLLPWIGELVGPGPWLALATTCALFPGIFGLFAVVVRLLPGWPIWFAVGWAAQEWLKSILPFGGFPWGSVAFGQAEGPLLPLVQLGGVALLSTGVALVGCGLTAIALEIEKWWRTGGQGDAPPAVVLPAACICLVLFAAIVVWPQVRHAGSGSGGEPTVTVAVVQGNVPRLGLDFNAQRRAVLDNHVEETLRLAADVHAGLAQQPQFVIWPENSSDIDPFVNPDAGQRISAAAEAIGAPILIGTLMDVPGRPRENPEWTNTAIVWNPGTGPADRHDKAIVQPFGEYLPMPWLFRHLSGYADRAGHFVPGNGTGVVRIAGVPVGVATCWEVIFDRAPRKSILGGAQLLTVPSNNATFNKTMSEQQLAFAKVRAVEHDRYVVVAGTTGISAVIAPDGGELIRTDFFQPAYLDSQVRLKTRLTPATRWGPILQWILVGAAAAVVLVAMRQNGWFPRPRRSEPKGENDDSDAPPGRSEASGPPALSESDDELIQPEQGGRHSSGFGRHRATSRSYMTTGQPAPPAPGNRPSQRVLVIIPTFNERENLPVIHRRLTQACPAVHVLVVDDSSPDGTGQLADELAQADPGRTHVMHRTAKNGLGAAYLAGFAWGLSREYSVLVEMDADGSHAPEQLQRLLDAVDAGADLAIGSRYVAGGTVRNWPWRRLVLSKTANTYSRLALGIGIHDITAGYRAYRREALEAIDLDGVDSKGYCFQIDLTWRTVSNGFVVTEVPITFTERELGVSKMSGSNIREALVKVARWGIEGRLSRSDHARARPDIARPGAGGSRVSRADVTE.

The segment at 1–593 (MKLGAWVAAQ…GRHRATSRSY (593 aa)) is apolipoprotein N-acyltransferase. The next 5 helical transmembrane spans lie at 23–42 (TRLVVSIVAGLLLYASFPPR), 72–89 (YGLLFGLVFYVSLLPWIG), 94–115 (PGPWLALATTCALFPGIFGLFA), 177–194 (VALVGCGLTAIALEIEKW), and 206–223 (AVVLPAACICLVLFAAIV). One can recognise a CN hydrolase domain in the interval 241–497 (VTVAVVQGNV…PAYLDSQVRL (257 aa)). Glu-294 (proton acceptor) is an active-site residue. Lys-359 is a catalytic residue. The active-site Nucleophile is Cys-409. Residues 509–526 (PILQWILVGAAAAVVLVA) form a helical membrane-spanning segment. Disordered stretches follow at residues 533-609 (FPRP…NRPS) and 852-874 (RARPDIARPGAGGSRVSRADVTE). The interval 594–874 (MTTGQPAPPA…SRVSRADVTE (281 aa)) is polyprenol monophosphomannose synthase.

The protein in the N-terminal section; belongs to the CN hydrolase family. Apolipoprotein N-acyltransferase subfamily. In the C-terminal section; belongs to the glycosyltransferase 2 family.

Its subcellular location is the cell membrane. The enzyme catalyses N-terminal S-1,2-diacyl-sn-glyceryl-L-cysteinyl-[lipoprotein] + a glycerophospholipid = N-acyl-S-1,2-diacyl-sn-glyceryl-L-cysteinyl-[lipoprotein] + a 2-acyl-sn-glycero-3-phospholipid + H(+). The catalysed reaction is a di-trans,poly-cis-dolichyl phosphate + GDP-alpha-D-mannose = a di-trans,poly-cis-dolichyl beta-D-mannosyl phosphate + GDP. The protein operates within protein modification; lipoprotein biosynthesis (N-acyl transfer). Catalyzes the phospholipid dependent N-acylation of the N-terminal cysteine of apolipoprotein, the last step in lipoprotein maturation. In terms of biological role, transfers mannose from GDP-mannose to lipid acceptors to form polyprenol monophosphomannose (PPM). PMM is an alkai-stable sugar donor which adds mannose-phosphate residues to triacylated-phosphatidyl-myo-inositol mannosides (PIM2), eventually leading to generation of the cell wall glycolipid lipoglycan modulins lipoarabinomannan (LAM) and lipomannan (LM). The sequence is that of Bifunctional apolipoprotein N-acyltransferase/polyprenol monophosphomannose synthase from Mycobacterium bovis (strain BCG / Pasteur 1173P2).